Here is a 637-residue protein sequence, read N- to C-terminus: DNA gyrase subunit B (637 aa).

In terms of domain architecture, Toprim spans 420 to 534 (CEIYIVEGDS…EGHVFIAQPP (115 aa)). Glutamate 426, aspartate 499, and aspartate 501 together coordinate Mg(2+).

Belongs to the type II topoisomerase GyrB family. Heterotetramer, composed of two GyrA and two GyrB chains. In the heterotetramer, GyrA contains the active site tyrosine that forms a transient covalent intermediate with DNA, while GyrB binds cofactors and catalyzes ATP hydrolysis. The cofactor is Mg(2+). It depends on Mn(2+) as a cofactor. Ca(2+) is required as a cofactor.

It is found in the cytoplasm. The enzyme catalyses ATP-dependent breakage, passage and rejoining of double-stranded DNA.. In terms of biological role, a type II topoisomerase that negatively supercoils closed circular double-stranded (ds) DNA in an ATP-dependent manner to modulate DNA topology and maintain chromosomes in an underwound state. Negative supercoiling favors strand separation, and DNA replication, transcription, recombination and repair, all of which involve strand separation. Also able to catalyze the interconversion of other topological isomers of dsDNA rings, including catenanes and knotted rings. Type II topoisomerases break and join 2 DNA strands simultaneously in an ATP-dependent manner. The protein is DNA gyrase subunit B of Clostridium acetobutylicum (strain ATCC 824 / DSM 792 / JCM 1419 / IAM 19013 / LMG 5710 / NBRC 13948 / NRRL B-527 / VKM B-1787 / 2291 / W).